The primary structure comprises 382 residues: MKALHFGAGNIGRGFIGKLLADAGIQLTFADVNQVVLDALNARHSYQVHVVGETEQVDTVSGVNAVSSIGDDVVDLIAQVDLVTTAVGPVVLERIAPAIAKGLVKRKEQGNESPLNIIACENMVRGTTQLKGHVMNALPEDAKAWVEEHVGFVDSAVDRIVPPSASATNDPLEVTVETFSEWIVDKTQFKGALPNIPGMELTDNLMAFVERKLFTLNTGHAITAYLGKLAGHQTIRDAILDEKIRAVVKGAMEESGAVLIKRYGFDADKHAAYIQKILGRFENPYLKDDVERVGRQPLRKLSAGDRLIKPLLGTLEYSLPHKNLIQGIAGAMHFRSEDDPQAQELAALIADKGPQAALAQISDLDANSEVVSEAVTAYKAMQ.

3–14 (ALHFGAGNIGRG) contributes to the NAD(+) binding site. K269 bears the N6-acetyllysine mark.

Belongs to the mannitol dehydrogenase family.

The catalysed reaction is D-mannitol 1-phosphate + NAD(+) = beta-D-fructose 6-phosphate + NADH + H(+). The chain is Mannitol-1-phosphate 5-dehydrogenase from Shigella sonnei (strain Ss046).